Here is a 525-residue protein sequence, read N- to C-terminus: GMP synthase [glutamine-hydrolyzing] (525 aa).

Residues 9–207 (RILILDFGSQ…VRDICQCEAL (199 aa)) enclose the Glutamine amidotransferase type-1 domain. Cysteine 86 acts as the Nucleophile in catalysis. Catalysis depends on residues histidine 181 and glutamate 183. The GMPS ATP-PPase domain maps to 208-400 (WTPAKIIDDA…LGLPYDMLYR (193 aa)). 235 to 241 (SGGVDSS) serves as a coordination point for ATP.

In terms of assembly, homodimer.

It catalyses the reaction XMP + L-glutamine + ATP + H2O = GMP + L-glutamate + AMP + diphosphate + 2 H(+). It participates in purine metabolism; GMP biosynthesis; GMP from XMP (L-Gln route): step 1/1. Its function is as follows. Catalyzes the synthesis of GMP from XMP. The sequence is that of GMP synthase [glutamine-hydrolyzing] from Shigella dysenteriae serotype 1 (strain Sd197).